We begin with the raw amino-acid sequence, 398 residues long: Cytochrome b561 and DOMON domain-containing protein At3g61750 (398 aa).

The first 23 residues, 1–23, serve as a signal peptide directing secretion; that stretch reads MKTLVGFYILCFLIGQDLPFLAA. The region spanning 64 to 177 is the DOMON domain; it reads NTFVLRYSEN…PRRAVILAFS (114 aa). A Cytochrome b561 domain is found at 184–377; it reads LGRLTKHDDK…LEIFRIRGTI (194 aa). Heme b is bound at residue His-220. 2 helical membrane passes run 222–242 and 252–272; these read VMAI…ARYL and LHIG…ILGI. Residues His-253 and His-285 each contribute to the heme b site. Helical transmembrane passes span 287–307, 320–340, and 351–371; these read GIGI…FARP, YHHW…VLGI, and KIGY…LEIF. A heme b-binding site is contributed by His-321.

Heme b serves as cofactor.

It localises to the membrane. Functionally, may act as a catecholamine-responsive trans-membrane electron transporter. The sequence is that of Cytochrome b561 and DOMON domain-containing protein At3g61750 from Arabidopsis thaliana (Mouse-ear cress).